Here is a 105-residue protein sequence, read N- to C-terminus: MNDILIKLEQVLEQRKSAKVDESYISSLYNKGTDEILKKIAEESAEVIMAAKDGVNDKIIYEVADLWFHTLVLLRFKEIKVNQITNELSRRFGLSGLQEKAKRNN.

Belongs to the PRA-PH family.

It localises to the cytoplasm. It carries out the reaction 1-(5-phospho-beta-D-ribosyl)-ATP + H2O = 1-(5-phospho-beta-D-ribosyl)-5'-AMP + diphosphate + H(+). It participates in amino-acid biosynthesis; L-histidine biosynthesis; L-histidine from 5-phospho-alpha-D-ribose 1-diphosphate: step 2/9. In Ruthia magnifica subsp. Calyptogena magnifica, this protein is Phosphoribosyl-ATP pyrophosphatase.